Here is a 132-residue protein sequence, read N- to C-terminus: uncharacterized protein (132 aa).

The N-terminal stretch at 1-19 (MKKALFLVGLVFTAGVISS) is a signal peptide. C20 is lipidated: N-palmitoyl cysteine. A lipid anchor (S-diacylglycerol cysteine) is attached at C20.

Its subcellular location is the cell membrane. This is an uncharacterized protein from Aquifex aeolicus (strain VF5).